Here is a 78-residue protein sequence, read N- to C-terminus: Small ribosomal subunit protein uS17 (78 aa).

It belongs to the universal ribosomal protein uS17 family. In terms of assembly, part of the 30S ribosomal subunit.

Its function is as follows. One of the primary rRNA binding proteins, it binds specifically to the 5'-end of 16S ribosomal RNA. This Sinorhizobium fredii (strain NBRC 101917 / NGR234) protein is Small ribosomal subunit protein uS17.